The primary structure comprises 320 residues: Cytochrome f (320 aa).

The N-terminal stretch at 1-35 (MQTRNTFSWIREEITRSISVSLMIYIITWASISSA) is a signal peptide. Residues Tyr36, Cys56, Cys59, and His60 each coordinate heme. A helical membrane pass occupies residues 286–306 (VQGLLFFLGSVVLAQIFLVLK).

Belongs to the cytochrome f family. As to quaternary structure, the 4 large subunits of the cytochrome b6-f complex are cytochrome b6, subunit IV (17 kDa polypeptide, petD), cytochrome f and the Rieske protein, while the 4 small subunits are PetG, PetL, PetM and PetN. The complex functions as a dimer. It depends on heme as a cofactor.

The protein localises to the plastid. It is found in the chloroplast thylakoid membrane. Its function is as follows. Component of the cytochrome b6-f complex, which mediates electron transfer between photosystem II (PSII) and photosystem I (PSI), cyclic electron flow around PSI, and state transitions. This is Cytochrome f from Crucihimalaya wallichii (Rock-cress).